The primary structure comprises 382 residues: Proton extrusion protein PxcA (382 aa).

Helical transmembrane passes span 156–176 (TLIS…VQQV), 257–277 (AVKN…VCLF), 305–325 (IILF…TVLL), and 340–360 (FILL…KYWI).

This sequence belongs to the CemA family.

Its subcellular location is the cell inner membrane. Its function is as follows. Required for H(+) efflux immediately after light irradiation to form a rapid H(+) concentration gradient across the thylakoid membranes. Together with PxcL, contributes to transient H(+) uptake following dark to light transition. The polypeptide is Proton extrusion protein PxcA (Synechococcus sp. (strain CC9311)).